The sequence spans 434 residues: Chaperone SurA (434 aa).

Residues 1–22 form the signal peptide; that stretch reads MKHSKKIIFALLALAMSNTSMA. PpiC domains are found at residues 173-274 and 283-383; these read DVEF…KVVD and VEEV…QLES.

It is found in the periplasm. It catalyses the reaction [protein]-peptidylproline (omega=180) = [protein]-peptidylproline (omega=0). In terms of biological role, chaperone involved in the correct folding and assembly of outer membrane proteins. Recognizes specific patterns of aromatic residues and the orientation of their side chains, which are found more frequently in integral outer membrane proteins. May act in both early periplasmic and late outer membrane-associated steps of protein maturation. The polypeptide is Chaperone SurA (Shewanella frigidimarina (strain NCIMB 400)).